Reading from the N-terminus, the 404-residue chain is Phosphoglycerate kinase (404 aa).

Residues 22 to 24 (DLN), R37, 60 to 63 (HLGR), R119, and R156 contribute to the substrate site. Residues K206, G302, E333, and 359–362 (GGDS) each bind ATP.

This sequence belongs to the phosphoglycerate kinase family. In terms of assembly, monomer.

The protein localises to the cytoplasm. It carries out the reaction (2R)-3-phosphoglycerate + ATP = (2R)-3-phospho-glyceroyl phosphate + ADP. The protein operates within carbohydrate degradation; glycolysis; pyruvate from D-glyceraldehyde 3-phosphate: step 2/5. The chain is Phosphoglycerate kinase from Clavibacter sepedonicus (Clavibacter michiganensis subsp. sepedonicus).